The chain runs to 681 residues: Chaperone protein HtpG (681 aa).

The tract at residues 1 to 326 is a; substrate-binding; it reads MQKGNIGVTT…SPDIPLNVSR (326 aa). The segment at 327-545 is b; sequence SYLQSDSNVK…YMRRMKEMAN (219 aa). Residues 546 to 681 form a c region; that stretch reads IQAGMSFYGE…NFVKRSIELI (136 aa). The disordered stretch occupies residues 589–620; that stretch reads IQTEMNSVSKRRNELKDSQKDKKEEDIPTAEK. The segment covering 599-620 has biased composition (basic and acidic residues); sequence RRNELKDSQKDKKEEDIPTAEK.

It belongs to the heat shock protein 90 family. Homodimer.

The protein resides in the cytoplasm. Its function is as follows. Molecular chaperone. Has ATPase activity. The sequence is that of Chaperone protein HtpG from Bacteroides thetaiotaomicron (strain ATCC 29148 / DSM 2079 / JCM 5827 / CCUG 10774 / NCTC 10582 / VPI-5482 / E50).